We begin with the raw amino-acid sequence, 339 residues long: Anthranilate phosphoribosyltransferase (339 aa).

5-phospho-alpha-D-ribose 1-diphosphate contacts are provided by residues glycine 81, 84-85, serine 89, 91-94, 109-117, and alanine 121; these read GD, NVSS, and KHGNRALSS. Anthranilate is bound at residue glycine 81. Serine 93 lines the Mg(2+) pocket. Residue asparagine 112 coordinates anthranilate. Arginine 167 is a binding site for anthranilate. Residues aspartate 225 and glutamate 226 each contribute to the Mg(2+) site.

This sequence belongs to the anthranilate phosphoribosyltransferase family. In terms of assembly, homodimer. It depends on Mg(2+) as a cofactor.

It carries out the reaction N-(5-phospho-beta-D-ribosyl)anthranilate + diphosphate = 5-phospho-alpha-D-ribose 1-diphosphate + anthranilate. It participates in amino-acid biosynthesis; L-tryptophan biosynthesis; L-tryptophan from chorismate: step 2/5. Its function is as follows. Catalyzes the transfer of the phosphoribosyl group of 5-phosphorylribose-1-pyrophosphate (PRPP) to anthranilate to yield N-(5'-phosphoribosyl)-anthranilate (PRA). This Brucella abortus (strain S19) protein is Anthranilate phosphoribosyltransferase.